Consider the following 1489-residue polypeptide: MAGNSLVLPIVLWGRKAPTHCISSILLTDDGGTIVTGCHDGQICLWDVSVELEVNPRALLFGHTASITCLSKACASGDKRYTVSASANGEMCLWDVNDGRCIEFTKLACTHTGIQFYQFSVGNQQEGRLLCHGHYPEILVVDATSLEVLYSLVSKISPDWISSMSIIRSQRTQEDTVVALSVTGILKVWIVTSEMSGMQDTEPIFEEESKPIYCQNCQSISFCAFTQRSLLVVCSKYWRVFDAGDYSLLCSGPSENGQTWTGGDFVSADKVIIWTENGQSYIYKLPASCLPASDSFRSDVGKAVENLIPPVQHSLLDQKDKELVICPPVTRFFYGCKEYLHKLLIQGDSSGRLNIWNIADIAEKQEADEGLKMTTCISLQEAFDKLKPCPAGIIDQLSVIPNSNEPLKVTASVYIPAHGRLVCGREDGSIIIVPATQTAIVQLLQGEHMLRRGWPPHRTLRGHRNKVTCLLYPHQVSARYDQRYLISGGVDFSVIIWDIFSGEMKHIFCVHGGEITQLLVPPENCSARVQHCICSVASDHSVGLLSLREKKCIMLASRHLFPIQVIKWRPSDDYLVVGCTDGSVYVWQMDTGALDRCAMGITAVEILNACDEAVPAAVDSLSHPAVNLKQAMTRRSLAALKNMAHHKLQTLATNLLASEASDKGNLPKYSHNSLMVQAIKTNLTDPDIHVLFFDVEALIIQLLTEEASRPNTALISPENLQKASGSSDKGGSFLTGKRAAVLFQQVKETIKENIKEHLLDEEEDEEEARRQSREDSDPEYRASKSKPLTLLEYNLTMDTAKLFMSCLHAWGLNEVLDEVCLDRLGMLKPHCTVSFGLLSRGGHMSLMLPGYNQAAGKLLHAKAEVGRKLPAAEGVGKGTYTVSRAVTTQHLLSIISLANTLMSMTNATFIGDHMKKGPTRPPRPGTPDLSKARDSPPPSSNIVQGQIKQAAAPVVSARSDADHSGSDSASPALPTCFLVNEGWSQLAAMHCVMLPDLLGLERFRPPLLEMLARRWQDRCLEVREAAQALLLAELRRIEQAGRKETIDTWAPYLPQYMDHVISPGVTAEAMQTMAAAPDASGPEAKVQEEEHDLVDDDITAGCLSSVPQMKKISTSYEERRKQATAIVLLGVIGAEFGAEIEPPKLLTRPRSSSQIPEGFGLTSGGSNYSLARHTCKALTYLLLQPPSPKLPPHSTIRRTATDLIGRGFTVWEPYMDVSAVLMGLLELCADAEKQLANITMGLPLSPAADSARSARHALSLIATARPPAFITTIAKEVHRHTALAANTQSQQSIHTTTLARAKGEILRVIEILIEKMPTDVVDLLVEVMDIIMYCLEGSLVKKKGLQECFPAICRFYMVSYYERSHRIAVGARHGSVALYDIRTGKCQTIHGHKGPITAVSFAPDGRYLATYSNTDSHISFWQMNTSLLGSIGMLNSAPQLRCIKTYQVPPVQPASPGSHNALKLARLIWTSNRNVILMAHDGKEHRFMV.

WD repeat units lie at residues 17-56, 62-104, 156-199, 324-366, 404-443, 462-507, and 558-597; these read APTH…EVNP, GHTA…CIEF, ISPD…SGMQ, VICP…EKQE, NEPL…IVQL, GHRN…MKHI, and RHLF…LDRC. Disordered stretches follow at residues 754 to 783 and 911 to 947; these read IKEH…YRAS and GDHM…QGQI. Residues 767-782 show a composition bias toward basic and acidic residues; it reads EARRQSREDSDPEYRA. Serine 935 bears the Phosphoserine mark. WD repeat units lie at residues 1350 to 1389 and 1391 to 1431; these read PAIC…CQTI and GHKG…LGSI. Residue serine 1455 is modified to Phosphoserine.

In Mus musculus (Mouse), this protein is WD repeat-containing protein 7 (Wdr7).